Consider the following 407-residue polypeptide: Lysosomal phospholipase A and acyltransferase (407 aa).

Positions Met1–Ala29 are cleaved as a signal peptide. A substrate-binding site is contributed by Asp41. An intrachain disulfide couples Cys60 to Cys84. The N-linked (GlcNAc...) asparagine glycan is linked to Asn94. The active-site Acyl-ester intermediate is the Ser193. Ser193 contributes to the Zn(2+) binding site. Met194 is a substrate binding site. An N-linked (GlcNAc...) asparagine glycan is attached at Asn284. Active-site charge relay system residues include Asp355 and His387. His387 is a Zn(2+) binding site. Asn393 is a glycosylation site (N-linked (GlcNAc...) asparagine).

This sequence belongs to the AB hydrolase superfamily. Lipase family. In terms of processing, N-glycosylated. N-glycosylated. N-glycosylation is important for maturation of the enzyme and normal subcellular location. Detected in brain (at protein level).

Its subcellular location is the lysosome. The protein localises to the secreted. The protein resides in the membrane. It carries out the reaction a 1,2-diacyl-sn-glycero-3-phosphocholine + H2O = a 2-acyl-sn-glycero-3-phosphocholine + a fatty acid + H(+). It catalyses the reaction 1-hexadecanoyl-2-(9Z-octadecenoyl)-sn-glycero-3-phosphocholine + H2O = 2-(9Z-octadecenoyl)-sn-glycero-3-phosphocholine + hexadecanoate + H(+). The enzyme catalyses 1,2-di-(9Z-octadecenoyl)-sn-glycero-3-phosphocholine + H2O = 2-(9Z-octadecenoyl)-sn-glycero-3-phosphocholine + (9Z)-octadecenoate + H(+). The catalysed reaction is 1-hexadecanoyl-2-glutaroyl-sn-glycero-3-phosphocholine + H2O = 2-glutaroyl-sn-glycero-3-phosphocholine + hexadecanoate + H(+). It carries out the reaction 1-hexadecanoyl-2-nonadioyl-sn-glycero-3-phosphocholine + H2O = 2-nonadioyl-sn-glycero-3-phosphocholine + hexadecanoate + H(+). It catalyses the reaction 1-hexadecanoyl-2-(5-oxopentanoyl)-sn-glycero-3-phosphocholine + H2O = 2-(5-oxopentanoyl)-sn-glycero-3-phosphocholine + hexadecanoate + H(+). The enzyme catalyses 1-hexadecanoyl-2-(9-oxononanoyl)-sn-glycero-3-phosphocholine + H2O = 2-(9-oxononanoyl)-sn-glycero-3-phosphocholine + hexadecanoate + H(+). The catalysed reaction is 1,2-dihexadecanoyl-sn-glycero-3-phosphocholine + H2O = 2-hexadecanoyl-sn-glycero-3-phosphocholine + hexadecanoate + H(+). It carries out the reaction a 1,2-diacyl-sn-glycero-3-phosphocholine + H2O = a 1-acyl-sn-glycero-3-phosphocholine + a fatty acid + H(+). It catalyses the reaction 1-hexadecanoyl-2-(9Z-octadecenoyl)-sn-glycero-3-phosphocholine + H2O = 1-hexadecanoyl-sn-glycero-3-phosphocholine + (9Z)-octadecenoate + H(+). The enzyme catalyses 1,2-di-(9Z-octadecenoyl)-sn-glycero-3-phosphocholine + H2O = 1-(9Z-octadecenoyl)-sn-glycero-3-phosphocholine + (9Z)-octadecenoate + H(+). The catalysed reaction is 1,2-dihexadecanoyl-sn-glycero-3-phosphocholine + H2O = 1-hexadecanoyl-sn-glycero-3-phosphocholine + hexadecanoate + H(+). It carries out the reaction a 1-acyl-sn-glycero-3-phosphocholine + H2O = sn-glycerol 3-phosphocholine + a fatty acid + H(+). It catalyses the reaction 1-hexadecanoyl-sn-glycero-3-phosphocholine + H2O = sn-glycerol 3-phosphocholine + hexadecanoate + H(+). The enzyme catalyses N-(acetyl)-sphing-4-enine + a 1,2-diacyl-sn-glycero-3-phosphoethanolamine = 1-O-acyl-N-(acetyl)-sphing-4-enine + a 2-acyl-sn-glycero-3-phosphoethanolamine. The catalysed reaction is 1-hexadecanoyl-2-(9Z-octadecenoyl)-sn-glycero-3-phosphoethanolamine + N-(acetyl)-sphing-4-enine = 2-(9Z-octadecenoyl)-sn-glycero-3-phosphoethanolamine + 1-hexadecanoyl-N-(acetyl)-sphing-4-enine. It carries out the reaction 1-hexadecanoyl-2-(9Z,12Z-octadecadienoyl)-sn-glycero-3-phosphoethanolamine + N-(acetyl)-sphing-4-enine = 2-(9Z,12Z)-octadecadienoyl-sn-glycero-3-phosphoethanolamine + 1-hexadecanoyl-N-(acetyl)-sphing-4-enine. It catalyses the reaction 1-hexadecanoyl-2-(5Z,8Z,11Z,14Z-eicosatetraenoyl)-sn-glycero-3-phosphoethanolamine + N-(acetyl)-sphing-4-enine = 2-(5Z,8Z,11Z,14Z)-eicosatetraenoyl-sn-glycero-3-phosphoethanolamine + 1-hexadecanoyl-N-(acetyl)-sphing-4-enine. The enzyme catalyses N-(acetyl)-sphing-4-enine + a 1,2-diacyl-sn-glycero-3-phosphoethanolamine = 1-O-acyl-N-(acetyl)-sphing-4-enine + a 1-acyl-sn-glycero-3-phosphoethanolamine. The catalysed reaction is 1-hexadecanoyl-2-(9Z-octadecenoyl)-sn-glycero-3-phosphoethanolamine + N-(acetyl)-sphing-4-enine = 1-(9Z-octadecenoyl)-N-(acetyl)-sphing-4-enine + 1-hexadecanoyl-sn-glycero-3-phosphoethanolamine. It carries out the reaction 1-hexadecanoyl-2-(9Z,12Z-octadecadienoyl)-sn-glycero-3-phosphoethanolamine + N-(acetyl)-sphing-4-enine = 1-(9Z,12Z-octadecadienoyl)-N-acetylsphing-4-enine + 1-hexadecanoyl-sn-glycero-3-phosphoethanolamine. It catalyses the reaction 1-hexadecanoyl-2-(5Z,8Z,11Z,14Z-eicosatetraenoyl)-sn-glycero-3-phosphoethanolamine + N-(acetyl)-sphing-4-enine = 1-(5Z,8Z,11Z,14Z)-eicosatetraenoyl-N-(acetyl)-sphing-4-enine + 1-hexadecanoyl-sn-glycero-3-phosphoethanolamine. The enzyme catalyses N-(acetyl)-sphing-4-enine + a 1,2-diacyl-sn-glycero-3-phosphocholine = 1-O-acyl-N-(acetyl)-sphing-4-enine + a 2-acyl-sn-glycero-3-phosphocholine. The catalysed reaction is 1-hexadecanoyl-2-(9Z-octadecenoyl)-sn-glycero-3-phosphocholine + N-(acetyl)-sphing-4-enine = 1-hexadecanoyl-N-(acetyl)-sphing-4-enine + 2-(9Z-octadecenoyl)-sn-glycero-3-phosphocholine. It carries out the reaction 1-hexadecanoyl-2-(9Z,12Z-octadecadienoyl)-sn-glycero-3-phosphocholine + N-(acetyl)-sphing-4-enine = 2-(9Z,12Z-octadecadienoyl)-sn-glycero-3-phosphocholine + 1-hexadecanoyl-N-(acetyl)-sphing-4-enine. It catalyses the reaction 1-hexadecanoyl-2-(5Z,8Z,11Z,14Z-eicosatetraenoyl)-sn-glycero-3-phosphocholine + N-(acetyl)-sphing-4-enine = 1-hexadecanoyl-N-(acetyl)-sphing-4-enine + 2-(5Z,8Z,11Z,14Z)-eicosatetraenoyl-sn-glycero-3-phosphocholine. The enzyme catalyses 1-hexadecanoyl-2-(4Z,7Z,10Z,13Z,16Z,19Z-docosahexaenoyl)-sn-glycero-3-phosphocholine + N-(acetyl)-sphing-4-enine = 2-(4Z,7Z,10Z,13Z,16Z,19Z-docosahexaenoyl)-sn-glycero-3-phosphocholine + 1-hexadecanoyl-N-(acetyl)-sphing-4-enine. The catalysed reaction is 1-hexadecanoyl-2-nonadioyl-sn-glycero-3-phosphocholine + N-(acetyl)-sphing-4-enine = 2-nonadioyl-sn-glycero-3-phosphocholine + 1-hexadecanoyl-N-(acetyl)-sphing-4-enine. It carries out the reaction 1-octadecanoyl-2-(9Z-octadecenoyl)-sn-glycero-3-phosphocholine + N-(acetyl)-sphing-4-enine = 1-octadecanoyl-N-(acetyl)-sphing-4-enine + 2-(9Z-octadecenoyl)-sn-glycero-3-phosphocholine. It catalyses the reaction 1-(9Z)-octadecenoyl-2-octadecanoyl-sn-glycero-3-phosphocholine + N-(acetyl)-sphing-4-enine = 2-octadecanoyl-sn-glycero-3-phosphocholine + 1-(9Z-octadecenoyl)-N-(acetyl)-sphing-4-enine. The enzyme catalyses 1-octadecanoyl-2-(5Z,8Z,11Z,14Z-eicosatetraenoyl)-sn-glycero-3-phosphocholine + N-(acetyl)-sphing-4-enine = 1-octadecanoyl-N-(acetyl)-sphing-4-enine + 2-(5Z,8Z,11Z,14Z)-eicosatetraenoyl-sn-glycero-3-phosphocholine. The catalysed reaction is 1-(9Z-octadecenoyl)-2-hexadecanoyl-sn-glycero-3-phosphocholine + N-(acetyl)-sphing-4-enine = 1-(9Z-octadecenoyl)-N-(acetyl)-sphing-4-enine + 2-hexadecanoyl-sn-glycero-3-phosphocholine. It carries out the reaction N-(acetyl)-sphing-4-enine + a 1,2-diacyl-sn-glycero-3-phosphocholine = 1-O-acyl-N-(acetyl)-sphing-4-enine + a 1-acyl-sn-glycero-3-phosphocholine. It catalyses the reaction 1-hexadecanoyl-2-(9Z-octadecenoyl)-sn-glycero-3-phosphocholine + N-(acetyl)-sphing-4-enine = 1-(9Z-octadecenoyl)-N-(acetyl)-sphing-4-enine + 1-hexadecanoyl-sn-glycero-3-phosphocholine. The enzyme catalyses 1-hexadecanoyl-2-(9Z,12Z-octadecadienoyl)-sn-glycero-3-phosphocholine + N-(acetyl)-sphing-4-enine = 1-(9Z,12Z-octadecadienoyl)-N-acetylsphing-4-enine + 1-hexadecanoyl-sn-glycero-3-phosphocholine. The catalysed reaction is 1-hexadecanoyl-2-(5Z,8Z,11Z,14Z-eicosatetraenoyl)-sn-glycero-3-phosphocholine + N-(acetyl)-sphing-4-enine = 1-(5Z,8Z,11Z,14Z)-eicosatetraenoyl-N-(acetyl)-sphing-4-enine + 1-hexadecanoyl-sn-glycero-3-phosphocholine. It carries out the reaction 1-hexadecanoyl-2-(4Z,7Z,10Z,13Z,16Z,19Z-docosahexaenoyl)-sn-glycero-3-phosphocholine + N-(acetyl)-sphing-4-enine = 1-(4Z,7Z,10Z,13Z,16Z,19Z-docosahexaenoyl)-N-(acetyl)-sphing-4-enine + 1-hexadecanoyl-sn-glycero-3-phosphocholine. It catalyses the reaction 1-octadecanoyl-2-(9Z-octadecenoyl)-sn-glycero-3-phosphocholine + N-(acetyl)-sphing-4-enine = 1-(9Z-octadecenoyl)-N-(acetyl)-sphing-4-enine + 1-octadecanoyl-sn-glycero-3-phosphocholine. The enzyme catalyses 1-octadecanoyl-2-(9Z,12Z)-octadecadienoyl-sn-glycero-3-phosphocholine + N-(acetyl)-sphing-4-enine = 1-(9Z,12Z-octadecadienoyl)-N-acetylsphing-4-enine + 1-octadecanoyl-sn-glycero-3-phosphocholine. The catalysed reaction is 1-(9Z-octadecenoyl)-2-hexadecanoyl-sn-glycero-3-phosphocholine + N-(acetyl)-sphing-4-enine = 1-hexadecanoyl-N-(acetyl)-sphing-4-enine + 1-(9Z-octadecenoyl)-sn-glycero-3-phosphocholine. It carries out the reaction 1-(9Z)-octadecenoyl-2-octadecanoyl-sn-glycero-3-phosphocholine + N-(acetyl)-sphing-4-enine = 1-octadecanoyl-N-(acetyl)-sphing-4-enine + 1-(9Z-octadecenoyl)-sn-glycero-3-phosphocholine. It catalyses the reaction 1,2-di-(9Z-octadecenoyl)-sn-glycero-3-phosphocholine + N-(acetyl)-sphing-4-enine = 1-(9Z-octadecenoyl)-N-(acetyl)-sphing-4-enine + 1-(9Z-octadecenoyl)-sn-glycero-3-phosphocholine. The enzyme catalyses 1-octadecanoyl-2-(5Z,8Z,11Z,14Z-eicosatetraenoyl)-sn-glycero-3-phosphocholine + N-(acetyl)-sphing-4-enine = 1-(5Z,8Z,11Z,14Z)-eicosatetraenoyl-N-(acetyl)-sphing-4-enine + 1-octadecanoyl-sn-glycero-3-phosphocholine. The catalysed reaction is a 1,2-diacyl-sn-glycero-3-phospho-L-serine + N-(acetyl)-sphing-4-enine = a 2-acyl-sn-glycero-3-phospho-L-serine + 1-O-acyl-N-(acetyl)-sphing-4-enine. It carries out the reaction 1-octadecanoyl-2-(9Z-octadecenoyl)-sn-glycero-3-phospho-L-serine + N-(acetyl)-sphing-4-enine = 2-(9Z-octadecenoyl)-sn-glycero-3-phospho-L-serine + 1-octadecanoyl-N-(acetyl)-sphing-4-enine. It catalyses the reaction a 1,2-diacyl-sn-glycero-3-phospho-L-serine + N-(acetyl)-sphing-4-enine = 1-O-acyl-N-(acetyl)-sphing-4-enine + a 1-acyl-sn-glycero-3-phospho-L-serine. The enzyme catalyses 1-octadecanoyl-2-(9Z-octadecenoyl)-sn-glycero-3-phospho-L-serine + N-(acetyl)-sphing-4-enine = 1-octadecanoyl-sn-glycero-3-phosphoserine + 1-(9Z-octadecenoyl)-N-(acetyl)-sphing-4-enine. The catalysed reaction is a 1,2-diacyl-sn-glycero-3-phospho-(1'-sn-glycerol) + N-(acetyl)-sphing-4-enine = 2-acyl-sn-glycero-3-phospho-(1'-sn-glycerol) + 1-O-acyl-N-(acetyl)-sphing-4-enine. It carries out the reaction 1-octadecanoyl-2-(9Z-octadecenoyl)-sn-glycero-3-phospho-(1'-sn-glycerol) + N-(acetyl)-sphing-4-enine = 2-(9Z-octadecenoyl)-sn-glycero-3-phospho-(1'-sn-glycerol) + 1-octadecanoyl-N-(acetyl)-sphing-4-enine. It catalyses the reaction a 1,2-diacyl-sn-glycero-3-phospho-(1'-sn-glycerol) + N-(acetyl)-sphing-4-enine = 1-O-acyl-N-(acetyl)-sphing-4-enine + 1-acyl-sn-glycero-3-phospho-(1'-sn-glycerol). The enzyme catalyses 1-octadecanoyl-2-(9Z-octadecenoyl)-sn-glycero-3-phospho-(1'-sn-glycerol) + N-(acetyl)-sphing-4-enine = 1-octadecanoyl-sn-glycero-3-phospho-(1'-sn-glycerol) + 1-(9Z-octadecenoyl)-N-(acetyl)-sphing-4-enine. The catalysed reaction is an N-acylethanolamine + a 1,2-diacyl-sn-glycero-3-phosphocholine = 2-(acylamino)ethyl fatty acid + a 2-acyl-sn-glycero-3-phosphocholine. It carries out the reaction an N-acylethanolamine + a 1,2-diacyl-sn-glycero-3-phosphocholine = 2-(acylamino)ethyl fatty acid + a 1-acyl-sn-glycero-3-phosphocholine. It catalyses the reaction N-(5Z,8Z,11Z,14Z-eicosatetraenoyl)-ethanolamine + 1,2-di-(9Z-octadecenoyl)-sn-glycero-3-phosphocholine = 2-[(5Z,8Z,11Z,14Z)-eicosatetraenoylamino]ethyl (9Z)-octadecenoate + (9Z-octadecenoyl)-sn-glycero-3-phosphocholine. The enzyme catalyses N-(9Z-octadecenoyl) ethanolamine + 1,2-di-(9Z-octadecenoyl)-sn-glycero-3-phosphocholine = 2-[(9Z)-octadecenoylamino]ethyl (9Z)-octadecenoate + (9Z-octadecenoyl)-sn-glycero-3-phosphocholine. The catalysed reaction is a 3-acyl-sn-glycerol + a 1,2-diacyl-sn-glycero-3-phosphocholine = a 1,3-diacylglycerol + a 1-acyl-sn-glycero-3-phosphocholine. It carries out the reaction a 3-acyl-sn-glycerol + a 1,2-diacyl-sn-glycero-3-phosphocholine = a 1,3-diacylglycerol + a 2-acyl-sn-glycero-3-phosphocholine. It catalyses the reaction 3-(9Z-octadecenoyl)-sn-glycerol + 1,2-di-(9Z-octadecenoyl)-sn-glycero-3-phosphocholine = 1,3-di-(9Z-octadecenoyl)-glycerol + (9Z-octadecenoyl)-sn-glycero-3-phosphocholine. The enzyme catalyses 3-hexadecanoyl-sn-glycerol + 1,2-di-(9Z-octadecenoyl)-sn-glycero-3-phosphocholine = 1-(9Z)-octadecenoyl-3-hexadecanoyl-sn-glycerol + (9Z-octadecenoyl)-sn-glycero-3-phosphocholine. The catalysed reaction is a 1-acyl-sn-glycerol + a 1,2-diacyl-sn-glycero-3-phosphocholine = a 1,3-diacylglycerol + a 2-acyl-sn-glycero-3-phosphocholine. It carries out the reaction a 1-acyl-sn-glycerol + a 1,2-diacyl-sn-glycero-3-phosphocholine = a 1,3-diacylglycerol + a 1-acyl-sn-glycero-3-phosphocholine. It catalyses the reaction 1-(9Z-octadecenoyl)-sn-glycerol + 1,2-di-(9Z-octadecenoyl)-sn-glycero-3-phosphocholine = 1,3-di-(9Z-octadecenoyl)-glycerol + (9Z-octadecenoyl)-sn-glycero-3-phosphocholine. The enzyme catalyses 1-hexadecanoyl-sn-glycerol + 1,2-di-(9Z-octadecenoyl)-sn-glycero-3-phosphocholine = 1-hexadecanoyl-3-(9Z)-octadecenoyl-sn-glycerol + (9Z-octadecenoyl)-sn-glycero-3-phosphocholine. The catalysed reaction is a 2-acylglycerol + a 1,2-diacyl-sn-glycero-3-phosphocholine = a 1,2-diacylglycerol + a 2-acyl-sn-glycero-3-phosphocholine. It carries out the reaction a 2-acylglycerol + a 1,2-diacyl-sn-glycero-3-phosphocholine = a 1,2-diacylglycerol + a 1-acyl-sn-glycero-3-phosphocholine. It catalyses the reaction 2-hexadecanoylglycerol + 1,2-di-(9Z-octadecenoyl)-sn-glycero-3-phosphocholine = 1-(9Z)-octadecenoyl-2-hexadecanoylglycerol + (9Z-octadecenoyl)-sn-glycero-3-phosphocholine. The enzyme catalyses 1-O-alkylglycerol + a 1,2-diacyl-sn-glycero-3-phosphocholine = 1-O-alkyl-3-acylglycerol + a 1-acyl-sn-glycero-3-phosphocholine. The catalysed reaction is 1-O-alkylglycerol + a 1,2-diacyl-sn-glycero-3-phosphocholine = 1-O-alkyl-3-acylglycerol + a 2-acyl-sn-glycero-3-phosphocholine. It carries out the reaction 1-O-hexadecylglycerol + 1,2-di-(9Z-octadecenoyl)-sn-glycero-3-phosphocholine = 1-O-hexadecyl-3-(9Z)-octadecenoylglycerol + (9Z-octadecenoyl)-sn-glycero-3-phosphocholine. It catalyses the reaction 1-O-alkyl-2-acyl-sn-glycerol + a 1,2-diacyl-sn-glycero-3-phosphocholine = 1-O-alkyl-2,3-diacyl-sn-glycerol + a 2-acyl-sn-glycero-3-phosphocholine. The enzyme catalyses 1-O-alkyl-2-acyl-sn-glycerol + a 1,2-diacyl-sn-glycero-3-phosphocholine = 1-O-alkyl-2,3-diacyl-sn-glycerol + a 1-acyl-sn-glycero-3-phosphocholine. The catalysed reaction is 1-O-hexadecyl-2-acetyl-sn-glycerol + 1,2-di-(9Z-octadecenoyl)-sn-glycero-3-phosphocholine = 1-O-hexadecyl-2-acetyl-3-(9Z)-octadecenoyl-sn-glycerol + (9Z-octadecenoyl)-sn-glycero-3-phosphocholine. It carries out the reaction 1-O-hexadecyl-2-O-methyl-sn-glycerol + 1,2-di-(9Z-octadecenoyl)-sn-glycero-3-phosphocholine = 1-O-hexadecyl-2-O-methyl-3-(9Z)-octadecenoyl-sn-glycerol + (9Z-octadecenoyl)-sn-glycero-3-phosphocholine. It catalyses the reaction a 1,2-diacyl-sn-glycero-3-phosphoethanolamine + H2O = a 1-acyl-sn-glycero-3-phosphoethanolamine + a fatty acid + H(+). The enzyme catalyses 1-acyl-2-(5Z,8Z,11Z,14Z)-eicosatetraenoyl-sn-glycero-3-phosphoethanolamine + H2O = a 1-acyl-sn-glycero-3-phosphoethanolamine + (5Z,8Z,11Z,14Z)-eicosatetraenoate + H(+). The catalysed reaction is a 1,2-diacyl-sn-glycero-3-phospho-(1'-sn-glycerol) + H2O = 1-acyl-sn-glycero-3-phospho-(1'-sn-glycerol) + a fatty acid + H(+). It carries out the reaction 1-hexadecanoyl-2-(9Z-octadecenoyl)-sn-glycero-3-phospho-(1'-sn-glycerol) + H2O = 1-hexadecanoyl-sn-glycero-3-phospho-(1'-sn-glycerol) + (9Z)-octadecenoate + H(+). It catalyses the reaction a 1,2-diacyl-sn-glycero-3-phospho-(1'-sn-glycerol) + H2O = 2-acyl-sn-glycero-3-phospho-(1'-sn-glycerol) + a fatty acid + H(+). The enzyme catalyses 1-hexadecanoyl-2-(9Z-octadecenoyl)-sn-glycero-3-phospho-(1'-sn-glycerol) + H2O = 2-(9Z-octadecenoyl)-sn-glycero-3-phospho-(1'-sn-glycerol) + hexadecanoate + H(+). Transacylase activity is completely inhibited by Triton X-100 and partially inhibited by heparin. Moderately activated by Mg(2+) and Ca(2+). Functionally, has dual calcium-independent phospholipase and O-acyltransferase activities with a potential role in glycerophospholipid homeostasis and remodeling of acyl groups of lipophilic alcohols present in acidic cellular compartments. Catalyzes hydrolysis of the ester bond of the fatty acyl group attached at sn-1 or sn-2 position of phospholipids (phospholipase A1 or A2 activity) and transfer it to the hydroxyl group at the first carbon of lipophilic alcohols (O-acyltransferase activity). Among preferred fatty acyl donors are phosphatidylcholines, phosphatidylethanolamines, phosphatidylglycerols and phosphatidylserines. Favors sn-2 over sn-1 deacylation of unsaturated fatty acyl groups of phosphatidylcholines, phosphatidylethanolamines, and phosphatidylglycerols. Among preferred fatty acyl acceptors are natural lipophilic alcohols including short-chain ceramide N-acetyl-sphingosine (C2 ceramide), alkylacylglycerols, monoacylglycerols, and acylethanolamides such as anandamide and oleoylethanolamide. Selectively hydrolyzes the sn-1 fatty acyl group of truncated oxidized phospholipids and may play a role in detoxification of reactive oxidized phospholipids during oxidative stress. Required for normal phospholipid degradation in alveolar macrophages with potential implications in the clearance of pulmonary surfactant, which is mainly composed of dipalmitoylphosphatidylcholine (1,2-dihexadecanoyl-sn-glycero-3-phosphocholine). Involved in the first step of bis(monoacylglycero)phosphate (BMP) de novo synthesis from phosphatidylglycerol (1,2-diacyl-sn-glycero-3-phospho-(1'-sn-glycerol), PG). BMP is an important player in cargo sorting and degradation, regulation of cellular cholesterol levels and intercellular communication. At neutral pH, hydrolyzes the sn-1 fatty acyl group of the lysophosphatidylcholines. This chain is Lysosomal phospholipase A and acyltransferase (PLA2G15), found in Bos taurus (Bovine).